A 143-amino-acid polypeptide reads, in one-letter code: Probable glycine cleavage system H protein (143 aa).

The 83-residue stretch at 36-118 (VATVGITDFA…YGEGWIFKIK (83 aa)) folds into the Lipoyl-binding domain. N6-lipoyllysine is present on Lys77.

Belongs to the GcvH family. As to quaternary structure, the glycine cleavage system is composed of four proteins: P, T, L and H. The cofactor is (R)-lipoate.

Its function is as follows. The glycine cleavage system catalyzes the degradation of glycine. The H protein shuttles the methylamine group of glycine from the P protein to the T protein. The protein is Probable glycine cleavage system H protein of Aeropyrum pernix (strain ATCC 700893 / DSM 11879 / JCM 9820 / NBRC 100138 / K1).